The sequence spans 126 residues: Fluoride-specific ion channel FluC (126 aa).

The next 4 helical transmembrane spans lie at 4-24 (SILAVGIGGALGSLFRWFLGI), 35-55 (LGTFAANVIAGYVIGVAVAGF), 68-88 (FVITGLMGGLSTFSTFSAEVV), and 103-123 (IVIHVGASLVMTILGIATVSL). The Na(+) site is built by Gly-75 and Ser-78.

The protein belongs to the fluoride channel Fluc/FEX (TC 1.A.43) family.

The protein localises to the cell inner membrane. It carries out the reaction fluoride(in) = fluoride(out). With respect to regulation, na(+) is not transported, but it plays an essential structural role and its presence is essential for fluoride channel function. Fluoride-specific ion channel. Important for reducing fluoride concentration in the cell, thus reducing its toxicity. In Paraburkholderia xenovorans (strain LB400), this protein is Fluoride-specific ion channel FluC.